The sequence spans 365 residues: Galactoside alpha-(1,2)-fucosyltransferase 1 (365 aa).

The Cytoplasmic portion of the chain corresponds to 1–8 (MWPLSHRH). The helical; Signal-anchor for type II membrane protein transmembrane segment at 9–25 (LCLAFLLVCVLSAISFF) threads the bilayer. Residues 26–365 (LHLYQDSIRH…LSPLWTLAEP (340 aa)) are Lumenal-facing. Asn65, Asn301, and Asn327 each carry an N-linked (GlcNAc...) asparagine glycan.

Belongs to the glycosyltransferase 11 family.

The protein localises to the golgi apparatus. It is found in the golgi stack membrane. It carries out the reaction a beta-D-galactosyl-(1-&gt;4)-N-acetyl-beta-D-glucosaminyl derivative + GDP-beta-L-fucose = an alpha-L-Fuc-(1-&gt;2)-beta-D-Gal-(1-&gt;4)-beta-D-GlcNAc derivative + GDP + H(+). It catalyses the reaction a ganglioside GA1 + GDP-beta-L-fucose = a ganglioside Fuc-GA1 + GDP + H(+). The catalysed reaction is a beta-D-Gal-(1-&gt;3)-beta-D-GlcNAc-(1-&gt;3)-beta-D-Gal-(1-&gt;4)-beta-D-Glc-(1&lt;-&gt;1')-Cer(d18:1(4E)) + GDP-beta-L-fucose = alpha-L-fucosyl-(1-&gt;2)- beta-D-galactosyl-(1-&gt;3)-N-acetyl-beta-D-glucosaminyl-(1-&gt;3)-beta-D-galactosyl-(1-&gt;4)-beta-D-glucosyl-(1&lt;-&gt;1')-N-acylsphing-4-enine + GDP + H(+). The enzyme catalyses a neolactoside nLc4Cer(d18:1(4E)) + GDP-beta-L-fucose = a neolactoside IV(2)-alpha-Fuc-nLc4Cer(d18:1(4E)) + GDP + H(+). It carries out the reaction a ganglioside GM1 + GDP-beta-L-fucose = a ganglioside Fuc-GM1 + GDP + H(+). It catalyses the reaction beta-D-galactosyl-(1-&gt;3)-N-acetyl-D-galactosamine + GDP-beta-L-fucose = alpha-L-fucosyl-(1-&gt;2)-beta-D-galactosyl-(1-&gt;3)-N-acetyl-D-galactosamine + GDP + H(+). The protein operates within protein modification; protein glycosylation. Functionally, catalyzes the transfer of L-fucose, from a guanosine diphosphate-beta-L-fucose, to the terminal galactose residue of glycoconjugates through an alpha(1,2) linkage leading to H antigen synthesis that is an intermediate substrate in the synthesis of ABO blood group antigens. H antigen is essential for maturation of the glomerular layer of the main olfactory bulb, in cell migration and early cell-cell contacts during tumor associated angiogenesis. Preferentially fucosylates soluble lactose and to a lesser extent fucosylates glycolipids gangliosides GA1 and GM1a. The chain is Galactoside alpha-(1,2)-fucosyltransferase 1 from Leontopithecus chrysomelas (Golden-headed lion tamarin).